The primary structure comprises 98 residues: Keratinocyte differentiation-associated protein (98 aa).

The N-terminal stretch at 1–22 (MKIPILPIVALLSLLALHAAQG) is a signal peptide.

Ubiquitously expressed in stratified epithelium.

The protein resides in the secreted. In terms of biological role, may act as a soluble regulator of keratinocyte differentiation. May play an important role in embryonic skin morphogenesis. In Rattus norvegicus (Rat), this protein is Keratinocyte differentiation-associated protein.